The sequence spans 384 residues: ATP phosphoribosyltransferase regulatory subunit (384 aa).

Belongs to the class-II aminoacyl-tRNA synthetase family. HisZ subfamily. As to quaternary structure, heteromultimer composed of HisG and HisZ subunits.

The protein resides in the cytoplasm. It participates in amino-acid biosynthesis; L-histidine biosynthesis; L-histidine from 5-phospho-alpha-D-ribose 1-diphosphate: step 1/9. Functionally, required for the first step of histidine biosynthesis. May allow the feedback regulation of ATP phosphoribosyltransferase activity by histidine. The polypeptide is ATP phosphoribosyltransferase regulatory subunit (Rhodospirillum rubrum (strain ATCC 11170 / ATH 1.1.1 / DSM 467 / LMG 4362 / NCIMB 8255 / S1)).